We begin with the raw amino-acid sequence, 111 residues long: Cytochrome c 2.1 (111 aa).

Residue S2 is modified to N-acetylserine. C20, C23, H24, and M85 together coordinate heme c.

This sequence belongs to the cytochrome c family. Post-translationally, binds 1 heme c group covalently per subunit.

Its subcellular location is the mitochondrion intermembrane space. Its function is as follows. Electron carrier protein. The oxidized form of the cytochrome c heme group can accept an electron from the heme group of the cytochrome c1 subunit of cytochrome reductase. Cytochrome c then transfers this electron to the cytochrome oxidase complex, the final protein carrier in the mitochondrial electron-transport chain. In Caenorhabditis elegans, this protein is Cytochrome c 2.1 (cyc-2.1).